Here is a 38-residue protein sequence, read N- to C-terminus: Large ribosomal subunit protein bL36 (38 aa).

The protein belongs to the bacterial ribosomal protein bL36 family.

In Azotobacter vinelandii (strain DJ / ATCC BAA-1303), this protein is Large ribosomal subunit protein bL36.